A 212-amino-acid chain; its full sequence is Large ribosomal subunit protein uL3 (212 aa).

Q153 is modified (N5-methylglutamine).

This sequence belongs to the universal ribosomal protein uL3 family. In terms of assembly, part of the 50S ribosomal subunit. Forms a cluster with proteins L14 and L19. Methylated by PrmB.

One of the primary rRNA binding proteins, it binds directly near the 3'-end of the 23S rRNA, where it nucleates assembly of the 50S subunit. The protein is Large ribosomal subunit protein uL3 of Shewanella halifaxensis (strain HAW-EB4).